The primary structure comprises 338 residues: Patr class I histocompatibility antigen, alpha chain G (338 aa).

The N-terminal stretch at 1–24 (MVVMAPRTLFLLLSGALTLTETWA) is a signal peptide. Positions 25 to 114 (GSHSMRYFSA…LRGYYNQSEA (90 aa)) are alpha-1. Topologically, residues 25–308 (GSHSMRYFSA…KQSSLPTIPI (284 aa)) are extracellular. N-linked (GlcNAc...) asparagine glycosylation is present at N110. The alpha-2 stretch occupies residues 115–206 (SSHTLQWMIG…ENGKEMLQRA (92 aa)). Intrachain disulfides connect C125-C188 and C227-C283. Positions 207–298 (DPPKTHVTHH…GLPEPLMLRW (92 aa)) are alpha-3. Positions 209-299 (PKTHVTHHPV…LPEPLMLRWK (91 aa)) constitute an Ig-like C1-type domain. The connecting peptide stretch occupies residues 299–308 (KQSSLPTIPI). A helical membrane pass occupies residues 309-332 (MGIVAGLVVLAAVVTGAAVAAVLW). Residues 333 to 338 (RKKSSD) are Cytoplasmic-facing.

Belongs to the MHC class I family. Heterodimer of an alpha chain and a beta chain (beta-2-microglobulin). Homodimer; disulfide-linked. Binds to LILRB1 and LILRB2.

It is found in the cell membrane. In terms of biological role, involved in the presentation of foreign antigens to the immune system. The chain is Patr class I histocompatibility antigen, alpha chain G (Patr-G) from Pan troglodytes (Chimpanzee).